Reading from the N-terminus, the 157-residue chain is MSRRHSAEKRDIPGDPIYGSVILEKFINKVMMHGKKSVARKIVYSALERFGKKLNLENVLEGFGEALENAKPILEVRSRRVGGATYQVPVEVASERRNCLAMQWIIKHARSKPGKSMEVGLATELIDCFNKQGATIKKREDTHRMAEANKAFAHYKW.

It belongs to the universal ribosomal protein uS7 family. As to quaternary structure, part of the 30S ribosomal subunit. Contacts proteins S9 and S11.

One of the primary rRNA binding proteins, it binds directly to 16S rRNA where it nucleates assembly of the head domain of the 30S subunit. Is located at the subunit interface close to the decoding center, probably blocks exit of the E-site tRNA. The protein is Small ribosomal subunit protein uS7 of Chlamydia pneumoniae (Chlamydophila pneumoniae).